The primary structure comprises 436 residues: GTPase Der (436 aa).

2 EngA-type G domains span residues 4-167 and 176-351; these read PVVA…PKEE and VKFS…DNHS. Residues 10–17, 57–61, 119–122, 182–189, 229–233, and 294–297 each bind GTP; these read GRPNVGKS, DTGGI, NKVD, DTAGM, and NKWD. The KH-like domain maps to 352-436; that stretch reads LRVQSSMLND…PIRVIARKRK (85 aa).

It belongs to the TRAFAC class TrmE-Era-EngA-EngB-Septin-like GTPase superfamily. EngA (Der) GTPase family. In terms of assembly, associates with the 50S ribosomal subunit.

GTPase that plays an essential role in the late steps of ribosome biogenesis. The chain is GTPase Der from Listeria monocytogenes serotype 4b (strain F2365).